The chain runs to 498 residues: Pyridine nucleotide-disulfide oxidoreductase domain-containing protein 1 (498 aa).

Methionine 1 is subject to N-acetylmethionine.

Belongs to the class-I pyridine nucleotide-disulfide oxidoreductase family. PYROXD1 subfamily. Requires FAD as cofactor.

It is found in the nucleus. Its subcellular location is the cytoplasm. The protein resides in the myofibril. It localises to the sarcomere. Probable FAD-dependent oxidoreductase; involved in the cellular oxidative stress response. Required for normal sarcomere structure and muscle fiber integrity. The protein is Pyridine nucleotide-disulfide oxidoreductase domain-containing protein 1 (Pyroxd1) of Rattus norvegicus (Rat).